Here is a 157-residue protein sequence, read N- to C-terminus: Deoxyuridine 5'-triphosphate nucleotidohydrolase (157 aa).

DUMP is bound by residues Ser-63, Gly-76, Asp-79, Tyr-82, Lys-87, Arg-132, Phe-137, and Gly-138. The interval 125-157 (NDLESTERGAGGFGSTGINDEKKRKLDEAEAKE) is disordered. Positions 143 to 157 (NDEKKRKLDEAEAKE) are enriched in basic and acidic residues.

Belongs to the dUTPase family. Homotrimer. Mg(2+) serves as cofactor.

It catalyses the reaction dUTP + H2O = dUMP + diphosphate + H(+). It functions in the pathway pyrimidine metabolism; dUMP biosynthesis; dUMP from dCTP (dUTP route): step 2/2. Functionally, involved in nucleotide metabolism via production of dUMP, the immediate precursor of thymidine nucleotides, and decreases the intracellular concentration of dUTP so that uracil cannot be incorporated into DNA. The protein is Deoxyuridine 5'-triphosphate nucleotidohydrolase (DUT1) of Yarrowia lipolytica (strain CLIB 122 / E 150) (Yeast).